Reading from the N-terminus, the 474-residue chain is MSTLGRYRHVVKLGEGTYGMVYKGTEIQTGRVVAFKRMVVTSDDEGIPGAAIREICLLKELRHNNVVELFEVLFDPPKITMIFELCDCDLKRYMESRPQRLLDANTEMRPILKQIFLGLEYLHGRCVVHRDMKPQNIFVNVRGPDFAAMTALPSSPQQSMRVPHAGGTNGEAGRASANGNEHAPRPTAAEGSVSPWEEAANTKDAPNQLIIKIGDFGLARVEEIPVKKYSHEVVTLWYRSPDVLMSSALYSYPVDIWSMGAIFFEMATSKVLFSGRNEDEQLLRMFWLLGSPTKETWPSMMTYTGTMERLERSSRAAAERQDLTVNGDVYVQQQQLQAQQQQPQQGSSPSHSSSRAPDLLTQLAHKRFYHSESAMQQRRESASSAANSYRLPVELWFDRPLFKEYMAATRCDVSVSPEGIDLLRRCLMYEPNQRITAAEAVHHPYLERVPVPTAGSLDVLISSLMQTMETIHLL.

A Protein kinase domain is found at Y7–L446. ATP-binding positions include L13–V21 and K36. T17 is modified (phosphothreonine). The residue at position 18 (Y18) is a Phosphotyrosine. Catalysis depends on D131, which acts as the Proton acceptor. The interval T150–A200 is disordered. Phosphoserine is present on S230. Residues Q334–S354 show a composition bias toward low complexity. Positions Q334–A356 are disordered.

The protein belongs to the protein kinase superfamily. CMGC Ser/Thr protein kinase family. CDC2/CDKX subfamily. As to quaternary structure, may form a complex composed of at least the catalytic subunit CRK2 and a cyclin. Mg(2+) is required as a cofactor.

The protein resides in the cytoplasm. The catalysed reaction is L-seryl-[protein] + ATP = O-phospho-L-seryl-[protein] + ADP + H(+). It catalyses the reaction L-threonyl-[protein] + ATP = O-phospho-L-threonyl-[protein] + ADP + H(+). It carries out the reaction [DNA-directed RNA polymerase] + ATP = phospho-[DNA-directed RNA polymerase] + ADP + H(+). Phosphorylation at Thr-17 or Tyr-18 inactivates the enzyme, while phosphorylation at Ser-230 activates it. Its function is as follows. Serine/threonine-protein kinase. Involved in the control of the cell cycle. Required for entry into S-phase and mitosis. Probable component of the kinase complex that phosphorylates the repetitive C-terminus of RNA polymerase II. This is Cyclin-dependent kinase 2 homolog from Crithidia fasciculata.